The chain runs to 245 residues: 1-(5-phosphoribosyl)-5-[(5-phosphoribosylamino)methylideneamino] imidazole-4-carboxamide isomerase (245 aa).

Residue D8 is the Proton acceptor of the active site. D130 functions as the Proton donor in the catalytic mechanism.

This sequence belongs to the HisA/HisF family.

The protein localises to the cytoplasm. The enzyme catalyses 1-(5-phospho-beta-D-ribosyl)-5-[(5-phospho-beta-D-ribosylamino)methylideneamino]imidazole-4-carboxamide = 5-[(5-phospho-1-deoxy-D-ribulos-1-ylimino)methylamino]-1-(5-phospho-beta-D-ribosyl)imidazole-4-carboxamide. It participates in amino-acid biosynthesis; L-histidine biosynthesis; L-histidine from 5-phospho-alpha-D-ribose 1-diphosphate: step 4/9. This Pseudomonas aeruginosa (strain LESB58) protein is 1-(5-phosphoribosyl)-5-[(5-phosphoribosylamino)methylideneamino] imidazole-4-carboxamide isomerase.